We begin with the raw amino-acid sequence, 337 residues long: Glyceraldehyde-3-phosphate dehydrogenase (337 aa).

NAD(+) contacts are provided by residues 12 to 13 (RI), D36, R80, and S122. D-glyceraldehyde 3-phosphate-binding positions include 153-155 (SCT) and T184. C154 functions as the Nucleophile in the catalytic mechanism. NAD(+) is bound at residue N185. Residues R199, 212 to 213 (TG), and R235 contribute to the D-glyceraldehyde 3-phosphate site. N318 contacts NAD(+).

The protein belongs to the glyceraldehyde-3-phosphate dehydrogenase family. Homotetramer.

The protein localises to the cytoplasm. The catalysed reaction is D-glyceraldehyde 3-phosphate + phosphate + NAD(+) = (2R)-3-phospho-glyceroyl phosphate + NADH + H(+). It functions in the pathway carbohydrate degradation; glycolysis; pyruvate from D-glyceraldehyde 3-phosphate: step 1/5. Catalyzes the oxidative phosphorylation of glyceraldehyde 3-phosphate (G3P) to 1,3-bisphosphoglycerate (BPG) using the cofactor NAD. The first reaction step involves the formation of a hemiacetal intermediate between G3P and a cysteine residue, and this hemiacetal intermediate is then oxidized to a thioester, with concomitant reduction of NAD to NADH. The reduced NADH is then exchanged with the second NAD, and the thioester is attacked by a nucleophilic inorganic phosphate to produce BPG. This is Glyceraldehyde-3-phosphate dehydrogenase (gap) from Zymomonas mobilis subsp. mobilis (strain ATCC 31821 / ZM4 / CP4).